We begin with the raw amino-acid sequence, 121 residues long: Small ribosomal subunit protein uS13 (121 aa).

The interval 92-121 is disordered; that stretch reads RRGLPVRGQKTKNNSRTRKGPRKTMANKKK.

This sequence belongs to the universal ribosomal protein uS13 family. In terms of assembly, part of the 30S ribosomal subunit. Forms a loose heterodimer with protein S19. Forms two bridges to the 50S subunit in the 70S ribosome.

Located at the top of the head of the 30S subunit, it contacts several helices of the 16S rRNA. In the 70S ribosome it contacts the 23S rRNA (bridge B1a) and protein L5 of the 50S subunit (bridge B1b), connecting the 2 subunits; these bridges are implicated in subunit movement. Contacts the tRNAs in the A and P-sites. In Oceanobacillus iheyensis (strain DSM 14371 / CIP 107618 / JCM 11309 / KCTC 3954 / HTE831), this protein is Small ribosomal subunit protein uS13.